A 555-amino-acid chain; its full sequence is MARVEL domain-containing protein 2 (555 aa).

The span at 1 to 20 (MSSSDARSRIRDRGYSEVPR) shows a compositional bias: basic and acidic residues. A disordered region spans residues 1 to 71 (MSSSDARSRI…FYSSDTEEPA (71 aa)). Residues 1 to 191 (MSSSDARSRI…YMKSWAGLLR (191 aa)) are Cytoplasmic-facing. The segment covering 46 to 59 (PLPPPPLPLQPPFG) has biased composition (pro residues). Phosphoserine occurs at positions 117, 121, and 158. The disordered stretch occupies residues 118–142 (PPASPARANHHPYKDPSRGSQGTFN). Thr-163 bears the Phosphothreonine mark. The region spanning 185–364 (SWAGLLRILG…SALVCLKLWR (180 aa)) is the MARVEL domain. A helical membrane pass occupies residues 192 to 212 (ILGVVELLLGAGVFACVTAYI). Residues 213-251 (HKDNEWYNLFGYTQPYGMGGLGSLGNTYGGYYYSGPKTP) lie on the Extracellular side of the membrane. The helical transmembrane segment at 252 to 272 (FVLVVAGLAWITTIIILVLGM) threads the bilayer. Residues 273 to 288 (SMYYRTILLDSNWWPL) are Cytoplasmic-facing. The chain crosses the membrane as a helical span at residues 289–309 (TEFGVNVALFILYMAAAIVYV). At 310-338 (NDTNRGGLCYYPLFNTPMNAMFCRVEGGQ) the chain is on the extracellular side. Residues 339 to 359 (IAAMIFLFVTMIVYLVSALVC) form a helical membrane-spanning segment. Residues 360–555 (LKLWRHEAAR…VMNWDTQGYP (196 aa)) are Cytoplasmic-facing. A Phosphoserine modification is found at Ser-384. A Glycyl lysine isopeptide (Lys-Gly) (interchain with G-Cter in ubiquitin) cross-link involves residue Lys-408. An OCEL domain is found at 437–548 (PDYVAKYPVI…RIQEYDKVMN (112 aa)). Residues 521–545 (EKKERCDYLKNKLSHIKQRIQEYDK) are a coiled coil.

Belongs to the ELL/occludin family. In terms of assembly, interacts with TJP1. Interacts with the ubiquitin ligase ITCH. Interacts (via C-terminal cytoplasmic domain) with LSR (via the cytoplasmic domain), ILDR1 and ILDR2; the interaction is required to recruit MARVELD2 to tricellular contacts. In terms of processing, ubiquitinated by ITCH; but this ubiquitination does not lead to proteasomal degradation. Polyubiquitinated at Lys-408 via 'Lys-63'-linked ubiquitin chains; deubiquitinated by USP53. Post-translationally, phosphorylated. Detected in small intestine, stomach and kidney, in epithelial cells. Detected in pancreas, retina and lung, and in stria vascularis, utricle and the organ of Conti in the inner ear (at protein level). Predominantly detected in small intestine, lung and kidney, with lower levels in liver, testis and brain. In colon, expressed in the entire crypts.

The protein resides in the cell membrane. The protein localises to the cell junction. It is found in the tight junction. Plays a role in the formation of tricellular tight junctions and of epithelial barriers. Required for normal hearing via its role in the separation of the endolymphatic and perilymphatic spaces of the organ of Corti in the inner ear, and for normal survival of hair cells in the organ of Corti. In Mus musculus (Mouse), this protein is MARVEL domain-containing protein 2.